A 41-amino-acid polypeptide reads, in one-letter code: Large ribosomal subunit protein bL36 (41 aa).

This sequence belongs to the bacterial ribosomal protein bL36 family.

This chain is Large ribosomal subunit protein bL36, found in Bradyrhizobium diazoefficiens (strain JCM 10833 / BCRC 13528 / IAM 13628 / NBRC 14792 / USDA 110).